The following is a 168-amino-acid chain: MVLGLASFPESLSSQSETATQPRRPSVKWDLGSDYRKGTEETTASGSNFRRERLDSQPDLGLHVQPQIYFLRPRSPLPKLLFSLMNTNDANVKKLLPKSHLSRVIIRDNLNAQRICEMEMKASDKTKRKMSYLYDHLKKKFMMDQLRKMIRWRRDSQSTQDYLDKERV.

The tract at residues 1–52 is disordered; it reads MVLGLASFPESLSSQSETATQPRRPSVKWDLGSDYRKGTEETTASGSNFRRE. Residues 10 to 23 show a composition bias toward polar residues; it reads ESLSSQSETATQPR. Residues 31–40 are compositionally biased toward basic and acidic residues; that stretch reads LGSDYRKGTE.

This is an uncharacterized protein from Mus musculus (Mouse).